The primary structure comprises 558 residues: Glutamine--tRNA ligase (558 aa).

Positions 36–46 (PEPNGYLHLGH) match the 'HIGH' region motif. Residues 37-39 (EPN) and 43-49 (HLGHAKS) contribute to the ATP site. Positions 69 and 214 each coordinate L-glutamine. Residues threonine 233, 263–264 (RL), and 271–273 (LSK) each bind ATP. Residues 270 to 274 (LLSKR) carry the 'KMSKS' region motif.

Belongs to the class-I aminoacyl-tRNA synthetase family. In terms of assembly, monomer.

It localises to the cytoplasm. It carries out the reaction tRNA(Gln) + L-glutamine + ATP = L-glutaminyl-tRNA(Gln) + AMP + diphosphate. This is Glutamine--tRNA ligase from Nitrobacter hamburgensis (strain DSM 10229 / NCIMB 13809 / X14).